The chain runs to 301 residues: Sulfate adenylyltransferase subunit 2 (301 aa).

This sequence belongs to the PAPS reductase family. CysD subfamily. In terms of assembly, heterodimer composed of CysD, the smaller subunit, and CysN.

It catalyses the reaction sulfate + ATP + H(+) = adenosine 5'-phosphosulfate + diphosphate. It participates in sulfur metabolism; hydrogen sulfide biosynthesis; sulfite from sulfate: step 1/3. Its function is as follows. With CysN forms the ATP sulfurylase (ATPS) that catalyzes the adenylation of sulfate producing adenosine 5'-phosphosulfate (APS) and diphosphate, the first enzymatic step in sulfur assimilation pathway. APS synthesis involves the formation of a high-energy phosphoric-sulfuric acid anhydride bond driven by GTP hydrolysis by CysN coupled to ATP hydrolysis by CysD. The polypeptide is Sulfate adenylyltransferase subunit 2 (Trichlorobacter lovleyi (strain ATCC BAA-1151 / DSM 17278 / SZ) (Geobacter lovleyi)).